A 205-amino-acid chain; its full sequence is Probable GTP-binding protein EngB (205 aa).

Positions 22–198 constitute an EngB-type G domain; it reads HLPEYAFIGR…LSYIDEVNQD (177 aa). Residues 30-37, 57-61, 75-78, 142-145, and 177-179 each bind GTP; these read GRSNVGKS, GKTQL, DLPG, TKAD, and TSA. The Mg(2+) site is built by Ser37 and Thr59.

Belongs to the TRAFAC class TrmE-Era-EngA-EngB-Septin-like GTPase superfamily. EngB GTPase family. Mg(2+) serves as cofactor.

Functionally, necessary for normal cell division and for the maintenance of normal septation. This Flavobacterium psychrophilum (strain ATCC 49511 / DSM 21280 / CIP 103535 / JIP02/86) protein is Probable GTP-binding protein EngB.